Here is a 55-residue protein sequence, read N- to C-terminus: UPF0391 membrane protein Tbd_2772 (55 aa).

2 helical membrane passes run methionine 1–alanine 21 and alanine 28–methionine 48.

This sequence belongs to the UPF0391 family.

It localises to the cell membrane. This is UPF0391 membrane protein Tbd_2772 from Thiobacillus denitrificans (strain ATCC 25259 / T1).